The following is a 1306-amino-acid chain: Receptor-type tyrosine-protein phosphatase C (1306 aa).

The signal sequence occupies residues 1–25 (MTMYLWLKLLAFGFAFLDTEVFVTG). At 26-577 (QSPTPSPTGL…LHHSTSYNSK (552 aa)) the chain is on the extracellular side. The segment at 28-163 (PTPSPTGLTT…TASTFPTDPV (136 aa)) is disordered. 2 stretches are compositionally biased toward polar residues: residues 52–61 (THTTAFSPAS) and 70–131 (SETT…SGSA). N-linked (GlcNAc...) asparagine glycosylation is found at asparagine 80, asparagine 92, asparagine 97, asparagine 186, asparagine 192, asparagine 199, asparagine 234, asparagine 262, asparagine 272, and asparagine 278. Asparagine 286 carries an N-linked (GlcNAc...) asparagine; atypical glycan. Residues asparagine 337, asparagine 380, asparagine 421, asparagine 470, asparagine 490, and asparagine 531 are each glycosylated (N-linked (GlcNAc...) asparagine). Fibronectin type-III domains follow at residues 391–483 (SPGE…TKSA) and 484–576 (PPSQ…SYNS). A helical transmembrane segment spans residues 578 to 598 (ALIAFLAFLIIVTSIALLVVL). Topologically, residues 599–1306 (YKIYDLHKKR…PASPALNQGS (708 aa)) are cytoplasmic. Tyrosine-protein phosphatase domains follow at residues 653 to 912 (FLAE…LVEY) and 944 to 1228 (LEAE…IAST). Tyrosine 683 bears the Phosphotyrosine mark. Substrate is bound by residues aspartate 821, 853-859 (CSAGVGR), and glutamine 897. Catalysis depends on cysteine 853, which acts as the Phosphocysteine intermediate. 7 positions are modified to phosphoserine: serine 975, serine 994, serine 997, serine 1001, serine 1004, serine 1005, and serine 1009. Residues 993–1014 (MSKESEHDSDESSDDDSDSEEP) are disordered. Positions 999–1012 (HDSDESSDDDSDSE) are enriched in acidic residues. Cysteine 1169 serves as the catalytic Phosphocysteine intermediate. Residues 1261 to 1306 (CVNPLGAPEKLPEAKEQAEGSEPTSGTEGPEHSVNGPASPALNQGS) form a disordered region. Phosphoserine is present on serine 1299.

The protein belongs to the protein-tyrosine phosphatase family. Receptor class 1/6 subfamily. In terms of assembly, binds GANAB and PRKCSH. Interacts with SKAP1. Interacts with DPP4; the interaction is enhanced in an interleukin-12-dependent manner in activated lymphocytes. Interacts with CD53; this interaction stabilizes PTPRC on the membrane and is required for optimal phosphatase activity. As to quaternary structure, interacts with CLEC10A. Does not interact with CLEC10A. In terms of assembly, (Microbial infection) Interacts with human cytomegalovirus protein UL11; the interaction is required for binding of UL11 to T-cells. Post-translationally, heavily N- and O-glycosylated. In terms of tissue distribution, isoform 1: Detected in thymocytes. Isoform 2: Detected in thymocytes. Isoform 3: Detected in thymocytes. Isoform 4: Not detected in thymocytes. Isoform 5: Detected in thymocytes. Isoform 6: Not detected in thymocytes. Isoform 7: Detected in thymocytes. Isoform 8: Not detected in thymocytes.

The protein localises to the cell membrane. The protein resides in the membrane raft. It localises to the synapse. It carries out the reaction O-phospho-L-tyrosyl-[protein] + H2O = L-tyrosyl-[protein] + phosphate. Protein tyrosine-protein phosphatase required for T-cell activation through the antigen receptor. Acts as a positive regulator of T-cell coactivation upon binding to DPP4. The first PTPase domain has enzymatic activity, while the second one seems to affect the substrate specificity of the first one. Upon T-cell activation, recruits and dephosphorylates SKAP1 and FYN. Dephosphorylates LYN, and thereby modulates LYN activity. Interacts with CLEC10A at antigen presenting cell-T cell contact; CLEC10A on immature dendritic cells recognizes Tn antigen-carrying PTPRC/CD45 receptor on effector T cells and modulates T cell activation threshold to limit autoreactivity. Its function is as follows. (Microbial infection) Acts as a receptor for human cytomegalovirus protein UL11 and mediates binding of UL11 to T-cells, leading to reduced induction of tyrosine phosphorylation of multiple signaling proteins upon T-cell receptor stimulation and impaired T-cell proliferation. The polypeptide is Receptor-type tyrosine-protein phosphatase C (Homo sapiens (Human)).